The primary structure comprises 634 residues: Chaperone protein HtpG (634 aa).

The tract at residues methionine 1–arginine 345 is a; substrate-binding. The tract at residues glutamate 346–lysine 562 is b. Residues leucine 563–alanine 634 are c.

It belongs to the heat shock protein 90 family. Homodimer.

It is found in the cytoplasm. Functionally, molecular chaperone. Has ATPase activity. The protein is Chaperone protein HtpG of Psychromonas ingrahamii (strain DSM 17664 / CCUG 51855 / 37).